A 479-amino-acid polypeptide reads, in one-letter code: Phosphatidylinositol 4-kinase type 2-alpha (479 aa).

The residue at position 1 (Met-1) is an N-acetylmethionine. A disordered region spans residues 1-74 (MDETSPLVSP…ARGAAAQGQT (74 aa)). 5 positions are modified to phosphoserine: Ser-5, Ser-9, Ser-44, Ser-47, and Ser-51. The segment covering 31–45 (VPGGAVRVAAAAGSG) has biased composition (low complexity). Basic and acidic residues predominate over residues 53-66 (GHDRERQPLLDRAR). The PI3K/PI4K catalytic domain occupies 124 to 453 (CIFPERIYQG…VQMPPVIVET (330 aa)). The tract at residues 130–136 (IYQGSSG) is G-loop. Residues 131–137 (YQGSSGS) and Lys-152 each bind ATP. The interval 157–159 (EPY) is important for substrate binding. Residues 165–178 (KWTKWLQKLCCPCC) form an important for interaction with membranes region. Residues Cys-174, Cys-175, Cys-177, and Cys-178 are each lipidated (S-palmitoyl cysteine). 261 to 264 (QLFV) contributes to the ATP binding site. An important for interaction with membranes region spans residues 268–276 (KDADYWLRR). Residues 305 to 313 (RNTDRGNDN) form a catalytic loop region. Residues 344–364 (AIDNGLAFPLKHPDSWRAYPF) are activation loop. Position 346 (Asp-346) interacts with ATP. Residues 359–368 (WRAYPFYWAW) are important for interaction with membranes. Ser-462 carries the phosphoserine modification.

The protein belongs to the PI3/PI4-kinase family. Type II PI4K subfamily. As to quaternary structure, associates with the BLOC-1 and the AP-3 complexes; the BLOC-1 complex is required for optimal binding of PI4K2A to the AP-3 complex. Interacts with BLOC1S5 and DTNBP1. Interacts with FOS; this interaction may enhance phosphatidylinositol phosphorylation activity. Interacts with ITCH. Interacts with ATG9A. Palmitoylated by ZDHHC3 and ZDHHC7 in the CCPCC motif. Palmitoylation is cholesterol-dependent, and required for TGN localization. Post-translationally, ubiquitinated by ITCH; this does not lead to proteasomal degradation. In terms of tissue distribution, widely expressed. Highest expression is observed in kidney, brain, heart, skeletal muscle, and placenta and lowest expression is observed in colon, thymus, and small intestine.

The protein localises to the golgi apparatus. It is found in the trans-Golgi network membrane. It localises to the membrane raft. Its subcellular location is the cell projection. The protein resides in the dendrite. The protein localises to the presynaptic cell membrane. It is found in the synapse. It localises to the synaptosome. Its subcellular location is the mitochondrion. The protein resides in the endosome. The protein localises to the endosome membrane. It is found in the cytoplasmic vesicle. It localises to the membrane. Its subcellular location is the cell membrane. The protein resides in the perikaryon. The protein localises to the neuron projection. It carries out the reaction a 1,2-diacyl-sn-glycero-3-phospho-(1D-myo-inositol) + ATP = a 1,2-diacyl-sn-glycero-3-phospho-(1D-myo-inositol 4-phosphate) + ADP + H(+). Its function is as follows. Membrane-bound phosphatidylinositol-4 kinase (PI4-kinase) that catalyzes the phosphorylation of phosphatidylinositol (PI) to phosphatidylinositol 4-phosphate (PI4P), a lipid that plays important roles in endocytosis, Golgi function, protein sorting and membrane trafficking and is required for prolonged survival of neurons. Besides, phosphorylation of phosphatidylinositol (PI) to phosphatidylinositol 4-phosphate (PI4P) is the first committed step in the generation of phosphatidylinositol 4,5-bisphosphate (PIP2), a precursor of the second messenger inositol 1,4,5-trisphosphate (InsP3). The sequence is that of Phosphatidylinositol 4-kinase type 2-alpha (PI4K2A) from Homo sapiens (Human).